The primary structure comprises 425 residues: 2-oxoglutarate and iron-dependent oxygenase JMJD4 (425 aa).

In terms of domain architecture, JmjC spans Ser-141–Leu-300. Residues His-188, Asp-190, and His-268 each coordinate Fe cation.

It belongs to the JMJD6 family. It depends on Fe(2+) as a cofactor.

Its subcellular location is the cytoplasm. It carries out the reaction L-lysyl-[protein] + 2-oxoglutarate + O2 = 4-hydroxy-L-lysyl-[protein] + succinate + CO2. In terms of biological role, catalyzes the 2-oxoglutarate and iron-dependent C4-lysyl hydroxylation of ETF1 at 'Lys-63' thereby promoting the translational termination efficiency of ETF1. This Gallus gallus (Chicken) protein is 2-oxoglutarate and iron-dependent oxygenase JMJD4 (JMJD4).